A 159-amino-acid chain; its full sequence is Transcription elongation factor GreA (159 aa).

This sequence belongs to the GreA/GreB family.

Necessary for efficient RNA polymerase transcription elongation past template-encoded arresting sites. The arresting sites in DNA have the property of trapping a certain fraction of elongating RNA polymerases that pass through, resulting in locked ternary complexes. Cleavage of the nascent transcript by cleavage factors such as GreA or GreB allows the resumption of elongation from the new 3'terminus. GreA releases sequences of 2 to 3 nucleotides. This chain is Transcription elongation factor GreA, found in Buchnera aphidicola subsp. Baizongia pistaciae (strain Bp).